A 301-amino-acid chain; its full sequence is ATP synthase gamma chain (301 aa).

This sequence belongs to the ATPase gamma chain family. In terms of assembly, F-type ATPases have 2 components, CF(1) - the catalytic core - and CF(0) - the membrane proton channel. CF(1) has five subunits: alpha(3), beta(3), gamma(1), delta(1), epsilon(1). CF(0) has three main subunits: a, b and c.

Its subcellular location is the cell inner membrane. Its function is as follows. Produces ATP from ADP in the presence of a proton gradient across the membrane. The gamma chain is believed to be important in regulating ATPase activity and the flow of protons through the CF(0) complex. This chain is ATP synthase gamma chain, found in Bordetella pertussis (strain Tohama I / ATCC BAA-589 / NCTC 13251).